Here is a 621-residue protein sequence, read N- to C-terminus: Elongation factor 4 (621 aa).

The tr-type G domain occupies 21-203 (DLIRNICIIA…AIVKRVPPPK (183 aa)). GTP contacts are provided by residues 33 to 38 (DHGKTT) and 150 to 153 (NKID).

Belongs to the TRAFAC class translation factor GTPase superfamily. Classic translation factor GTPase family. LepA subfamily.

The protein resides in the cell inner membrane. It carries out the reaction GTP + H2O = GDP + phosphate + H(+). Functionally, required for accurate and efficient protein synthesis under certain stress conditions. May act as a fidelity factor of the translation reaction, by catalyzing a one-codon backward translocation of tRNAs on improperly translocated ribosomes. Back-translocation proceeds from a post-translocation (POST) complex to a pre-translocation (PRE) complex, thus giving elongation factor G a second chance to translocate the tRNAs correctly. Binds to ribosomes in a GTP-dependent manner. This chain is Elongation factor 4, found in Thermotoga maritima (strain ATCC 43589 / DSM 3109 / JCM 10099 / NBRC 100826 / MSB8).